The sequence spans 87 residues: Small ribosomal subunit protein uS17 (87 aa).

This sequence belongs to the universal ribosomal protein uS17 family. Part of the 30S ribosomal subunit.

In terms of biological role, one of the primary rRNA binding proteins, it binds specifically to the 5'-end of 16S ribosomal RNA. This is Small ribosomal subunit protein uS17 from Bacillus licheniformis (strain ATCC 14580 / DSM 13 / JCM 2505 / CCUG 7422 / NBRC 12200 / NCIMB 9375 / NCTC 10341 / NRRL NRS-1264 / Gibson 46).